A 161-amino-acid chain; its full sequence is Phosphopantetheine adenylyltransferase (161 aa).

Position 10 (threonine 10) interacts with substrate. ATP is bound by residues 10–11 (TF) and histidine 18. Substrate-binding residues include lysine 42, methionine 74, and arginine 88. Residues 89–91 (GLR), glutamate 99, and 124–130 (WSFISSS) each bind ATP.

Belongs to the bacterial CoaD family. As to quaternary structure, homohexamer. Mg(2+) is required as a cofactor.

The protein resides in the cytoplasm. It catalyses the reaction (R)-4'-phosphopantetheine + ATP + H(+) = 3'-dephospho-CoA + diphosphate. Its pathway is cofactor biosynthesis; coenzyme A biosynthesis; CoA from (R)-pantothenate: step 4/5. Reversibly transfers an adenylyl group from ATP to 4'-phosphopantetheine, yielding dephospho-CoA (dPCoA) and pyrophosphate. The sequence is that of Phosphopantetheine adenylyltransferase from Serratia marcescens.